Here is a 173-residue protein sequence, read N- to C-terminus: Dual-action ribosomal maturation protein DarP (173 aa).

Belongs to the DarP family.

It localises to the cytoplasm. Functionally, member of a network of 50S ribosomal subunit biogenesis factors which assembles along the 30S-50S interface, preventing incorrect 23S rRNA structures from forming. Promotes peptidyl transferase center (PTC) maturation. This Pseudomonas putida (strain W619) protein is Dual-action ribosomal maturation protein DarP.